Reading from the N-terminus, the 425-residue chain is Adenylosuccinate synthetase (425 aa).

Residues 12-18 (GDEGKGK) and 40-42 (GHT) each bind GTP. Asp-13 acts as the Proton acceptor in catalysis. Mg(2+)-binding residues include Asp-13 and Gly-40. Residues 13-16 (DEGK), 38-41 (NAGH), Thr-126, Arg-140, Gln-221, Thr-236, and Arg-300 each bind IMP. The active-site Proton donor is His-41. 296–302 (ATTGRPR) contributes to the substrate binding site. GTP contacts are provided by residues Arg-302, 328–330 (KLD), and 410–412 (STG).

This sequence belongs to the adenylosuccinate synthetase family. Homodimer. It depends on Mg(2+) as a cofactor.

The protein resides in the cytoplasm. The catalysed reaction is IMP + L-aspartate + GTP = N(6)-(1,2-dicarboxyethyl)-AMP + GDP + phosphate + 2 H(+). Its pathway is purine metabolism; AMP biosynthesis via de novo pathway; AMP from IMP: step 1/2. Its function is as follows. Plays an important role in the de novo pathway of purine nucleotide biosynthesis. Catalyzes the first committed step in the biosynthesis of AMP from IMP. The chain is Adenylosuccinate synthetase from Thermodesulfovibrio yellowstonii (strain ATCC 51303 / DSM 11347 / YP87).